Consider the following 235-residue polypeptide: Ubiquinone/menaquinone biosynthesis C-methyltransferase UbiE (235 aa).

2 residues coordinate S-adenosyl-L-methionine: Thr-60 and Asp-81.

The protein belongs to the class I-like SAM-binding methyltransferase superfamily. MenG/UbiE family.

The enzyme catalyses a 2-demethylmenaquinol + S-adenosyl-L-methionine = a menaquinol + S-adenosyl-L-homocysteine + H(+). The catalysed reaction is a 2-methoxy-6-(all-trans-polyprenyl)benzene-1,4-diol + S-adenosyl-L-methionine = a 5-methoxy-2-methyl-3-(all-trans-polyprenyl)benzene-1,4-diol + S-adenosyl-L-homocysteine + H(+). It functions in the pathway quinol/quinone metabolism; menaquinone biosynthesis; menaquinol from 1,4-dihydroxy-2-naphthoate: step 2/2. It participates in cofactor biosynthesis; ubiquinone biosynthesis. Functionally, methyltransferase required for the conversion of demethylmenaquinol (DMKH2) to menaquinol (MKH2) and the conversion of 2-polyprenyl-6-methoxy-1,4-benzoquinol (DDMQH2) to 2-polyprenyl-3-methyl-6-methoxy-1,4-benzoquinol (DMQH2). In Geotalea uraniireducens (strain Rf4) (Geobacter uraniireducens), this protein is Ubiquinone/menaquinone biosynthesis C-methyltransferase UbiE.